The primary structure comprises 475 residues: Putative poly(A) polymerase catalytic subunit (475 aa).

The protein belongs to the poxviridae poly(A) polymerase catalytic subunit family. Highly divergent.

Its subcellular location is the virion. It catalyses the reaction RNA(n) + ATP = RNA(n)-3'-adenine ribonucleotide + diphosphate. In terms of biological role, polymerase that creates the 3'-poly(A) tail of mRNA's. In Ornithodoros (relapsing fever ticks), this protein is Putative poly(A) polymerase catalytic subunit.